Consider the following 430-residue polypeptide: MELLHSINDFNEAKQVIAGGVNSPVRAFKSVKGTPPFILKGKGAYLYDVDNNHYIDFVQSWGPLIFGHADEEIEENIINVLKKGTSFGAPTELETTLAKEIISCYEGLDKVRLVNSGTEATMSAIRLARAYSQKDDLIKFEGCYHGHSDSLLVKAGSGCATFGSPSSLGVPNDFSKHTLVARYNDLNSTEECFKKGDVGCVIIEPIAGNMGLVPAQKEFLLGLKALCEKYQAVLILDEVMSGFRASLSGSQEFYGVVPDLVTFGKVIGAGLPLACFGGRAEIMDLLSPIGGVYQAGTLSGNPLAVCAGLSALYKIKRDKTLYTRLNALAVRLTQGLQKSAQNYNIALETLNMGSMFGFFFNENAVRDFDDALKSDTEMFAKFHQKMLFKGVYLACSSFETGFICEPMTEEMIDLAISKADESFDEIINGV.

Lys265 bears the N6-(pyridoxal phosphate)lysine mark.

The protein belongs to the class-III pyridoxal-phosphate-dependent aminotransferase family. HemL subfamily. In terms of assembly, homodimer. The cofactor is pyridoxal 5'-phosphate.

Its subcellular location is the cytoplasm. It catalyses the reaction (S)-4-amino-5-oxopentanoate = 5-aminolevulinate. The protein operates within porphyrin-containing compound metabolism; protoporphyrin-IX biosynthesis; 5-aminolevulinate from L-glutamyl-tRNA(Glu): step 2/2. The polypeptide is Glutamate-1-semialdehyde 2,1-aminomutase (hemL) (Helicobacter pylori (strain J99 / ATCC 700824) (Campylobacter pylori J99)).